The following is a 486-amino-acid chain: Palmitoleoyl-protein carboxylesterase notum2 (486 aa).

Residues 1 to 18 (MRILEIFAILLILKEVRP) form the signal peptide. Asn183 carries an N-linked (GlcNAc...) asparagine glycan. Residues Ser223, Asp331, and His380 each act as charge relay system in the active site.

This sequence belongs to the pectinacetylesterase family. Notum subfamily.

Its subcellular location is the secreted. The catalysed reaction is [Wnt protein]-O-(9Z)-hexadecenoyl-L-serine + H2O = [Wnt protein]-L-serine + (9Z)-hexadecenoate + H(+). Its function is as follows. Carboxylesterase that acts as a key negative regulator of the Wnt signaling pathway by specifically mediating depalmitoleoylation of WNT proteins. Serine palmitoleoylation of WNT proteins is required for efficient binding to frizzled receptors. In Xenopus laevis (African clawed frog), this protein is Palmitoleoyl-protein carboxylesterase notum2.